The chain runs to 146 residues: Cytochrome c-556 (146 aa).

An N-terminal signal peptide occupies residues 1 to 24; the sequence is MCMKLKTITAAMLFGCLCAGAVYA. Heme c is bound by residues Met35, Cys135, Cys138, and His139.

Monomer. In terms of processing, binds 1 heme c group covalently per subunit.

Low-spin monoheme cytochrome c. The chain is Cytochrome c-556 from Agrobacterium fabrum (strain C58 / ATCC 33970) (Agrobacterium tumefaciens (strain C58)).